Consider the following 303-residue polypeptide: Methionyl-tRNA formyltransferase (303 aa).

108–111 (SDLP) provides a ligand contact to (6S)-5,6,7,8-tetrahydrofolate.

This sequence belongs to the Fmt family.

The enzyme catalyses L-methionyl-tRNA(fMet) + (6R)-10-formyltetrahydrofolate = N-formyl-L-methionyl-tRNA(fMet) + (6S)-5,6,7,8-tetrahydrofolate + H(+). In terms of biological role, attaches a formyl group to the free amino group of methionyl-tRNA(fMet). The formyl group appears to play a dual role in the initiator identity of N-formylmethionyl-tRNA by promoting its recognition by IF2 and preventing the misappropriation of this tRNA by the elongation apparatus. The protein is Methionyl-tRNA formyltransferase of Rickettsia prowazekii (strain Madrid E).